A 275-amino-acid chain; its full sequence is Phosphonoacetaldehyde hydrolase (275 aa).

Aspartate 15 serves as the catalytic Nucleophile. Aspartate 15 and alanine 17 together coordinate Mg(2+). The Schiff-base intermediate with substrate role is filled by lysine 56. Aspartate 189 provides a ligand contact to Mg(2+).

It belongs to the HAD-like hydrolase superfamily. PhnX family. Homodimer. Requires Mg(2+) as cofactor.

The catalysed reaction is phosphonoacetaldehyde + H2O = acetaldehyde + phosphate + H(+). Involved in phosphonate degradation. The polypeptide is Phosphonoacetaldehyde hydrolase (Pseudomonas fluorescens (strain Pf0-1)).